A 502-amino-acid chain; its full sequence is Alpha-globin transcription factor CP2 (502 aa).

The 238-residue stretch at 63–300 (EILPFQYVLC…SPGFNSSHSS (238 aa)) folds into the Grh/CP2 DB domain. The segment at 133 to 386 (EHQQLEGWRW…LFNALKGRMV (254 aa)) is DNA-binding. Over residues 241-265 (KGADRKQKIDREKMEKRTPHEKEKY) the composition is skewed to basic and acidic residues. Disordered regions lie at residues 241 to 268 (KGAD…YQPS) and 294 to 326 (FNSS…NLLP). Ser353 bears the Phosphoserine mark.

The protein belongs to the grh/CP2 family. CP2 subfamily. As to quaternary structure, binds to DNA as a dimer. Interacts with UBP1 and PIAS1, and is probably part of a complex containing TFCP2, UBP1 and PIAS1. Component of the SSP (stage selector protein) complex, which appears to be a heteromer of TFCP2 and 2 copies of NFE4.

The protein localises to the nucleus. Functionally, binds a variety of cellular promoters including fibrinogen, alpha-globin promoters. Activation of the alpha-globin promoter in erythroid cells is via synergistic interaction with UBP1. Functions as part of the SSP (stage selector protein) complex. Facilitates the interaction of the gamma-globin genes with enhancer elements contained in the locus control region in fetal erythroid cells. Interacts by binding to the stage selector element (SSE) in the proximal gamma-globin promoter. The chain is Alpha-globin transcription factor CP2 (Tfcp2) from Mus musculus (Mouse).